Here is a 382-residue protein sequence, read N- to C-terminus: Neuropeptide Y receptor type 1 (382 aa).

At 1–33 (MNSTSFSQVENHSIFCNFSENSQFLAFESDDCH) the chain is on the extracellular side. 3 N-linked (GlcNAc...) asparagine glycosylation sites follow: Asn2, Asn11, and Asn17. The chain crosses the membrane as a helical span at residues 34 to 54 (LPLAMIFTLALAYGAVIILGV). The Cytoplasmic segment spans residues 55-75 (TGNLALIMIILKQKEMRNVTN). Residues 76 to 96 (ILIVNLSFSDLLVAIMCLPFT) traverse the membrane as a helical segment. Residues 97-115 (FVYTLMDHWVFGEAMCKLN) lie on the Extracellular side of the membrane. Cys112 and Cys197 are oxidised to a cystine. Residues 116–136 (PFVQCVSITVSIFSLVLIAVE) form a helical membrane-spanning segment. The Cytoplasmic segment spans residues 137-153 (RHQLIINPRGWRPNNRH). Residues 154 to 174 (AYVGIAVIWVLAVVSSLPFLI) traverse the membrane as a helical segment. Topologically, residues 175-210 (YQVLTDEPFQNVTLDAFKDKYVCFDKFPSDSHRLSY) are extracellular. Asn185 carries an N-linked (GlcNAc...) asparagine glycan. A helical transmembrane segment spans residues 211 to 231 (TTLLLMLQYFGPLCFIFICYF). Residues 232–259 (KIYIRLKRRNNMMDKMRDNKYRSSETKR) are Cytoplasmic-facing. A helical transmembrane segment spans residues 260-280 (INIMLLSIVVAFAVCWLPLTI). Topologically, residues 281–298 (FNTVFDWNHQIIATCNHN) are extracellular. A helical transmembrane segment spans residues 299–319 (LLFLLCHLTAMISTCVNPIFY). Residues 320-382 (GFLNKNFQRD…KINNDDNEKI (63 aa)) lie on the Cytoplasmic side of the membrane. Cys337 carries the S-palmitoyl cysteine lipid modification. Ser367 bears the Phosphoserine mark.

This sequence belongs to the G-protein coupled receptor 1 family.

It is found in the cell membrane. In terms of biological role, receptor for neuropeptide Y and peptide YY. The sequence is that of Neuropeptide Y receptor type 1 (NPY1R) from Canis lupus familiaris (Dog).